The chain runs to 378 residues: Flap endonuclease 1 (378 aa).

Residues 1–102 are N-domain; sequence MGIHGLAKLI…GELAKRSERR (102 aa). Residue R19 is modified to Symmetric dimethylarginine; by PRMT5. D34 provides a ligand contact to Mg(2+). DNA is bound by residues R47 and R69. K78 is modified (N6-acetyllysine). D84 contacts Mg(2+). 2 positions are modified to symmetric dimethylarginine; by PRMT5: R98 and R102. Residues 120-251 are I-domain; sequence EVEKFTKRLV…KRAVDLIQKH (132 aa). Residues E156, E158, D177, and D179 each coordinate Mg(2+). E156 provides a ligand contact to DNA. S185 bears the Phosphoserine; by CDK2 mark. R190 carries the post-translational modification Symmetric dimethylarginine; by PRMT5. Position 195 is a phosphoserine (S195). DNA contacts are provided by G229 and D231. Position 231 (D231) interacts with Mg(2+). S253, S291, and S333 each carry phosphoserine. Residues 325–378 form a disordered region; sequence RLSKSRQGSTQGRLDDFFKVTGSLSSAKRKEPEPKGPAKKKAKTGGAGKFRRGK. T334 carries the phosphothreonine modification. Residues 334 to 342 form an interaction with PCNA region; that stretch reads TQGRLDDFF. K352, K373, and K378 each carry N6-acetyllysine. A compositionally biased stretch (basic residues) spans 361-378; sequence PAKKKAKTGGAGKFRRGK.

The protein belongs to the XPG/RAD2 endonuclease family. FEN1 subfamily. As to quaternary structure, interacts with PCNA. Three molecules of FEN1 bind to one PCNA trimer with each molecule binding to one PCNA monomer. PCNA stimulates the nuclease activity without altering cleavage specificity. The C-terminal domain binds EP300; can bind simultaneously to both PCNA and EP300. Interacts with DDX11; this interaction is direct and increases flap endonuclease activity of FEN1. Interacts with WDR4; regulating its endonuclease activity. Interacts with POLB. Mg(2+) serves as cofactor. Acetylated by EP300. Acetylation inhibits both endonuclease and exonuclease activity. Acetylation also reduces DNA-binding activity but does not affect interaction with PCNA or EP300. In terms of processing, phosphorylation upon DNA damage induces relocalization to the nuclear plasma. Phosphorylation at Ser-185 by CDK2 occurs during late S-phase and results in dissociation from PCNA. Post-translationally, methylation at Arg-190 by PRMT5 impedes Ser-185 phosphorylation and increases interaction with PCNA.

Its subcellular location is the nucleus. It is found in the nucleolus. The protein resides in the nucleoplasm. It localises to the mitochondrion. Functionally, structure-specific nuclease with 5'-flap endonuclease and 5'-3' exonuclease activities involved in DNA replication and repair. During DNA replication, cleaves the 5'-overhanging flap structure that is generated by displacement synthesis when DNA polymerase encounters the 5'-end of a downstream Okazaki fragment. It enters the flap from the 5'-end and then tracks to cleave the flap base, leaving a nick for ligation. Also involved in the long patch base excision repair (LP-BER) pathway, by cleaving within the apurinic/apyrimidinic (AP) site-terminated flap. Acts as a genome stabilization factor that prevents flaps from equilibrating into structures that lead to duplications and deletions. Also possesses 5'-3' exonuclease activity on nicked or gapped double-stranded DNA, and exhibits RNase H activity. Also involved in replication and repair of rDNA and in repairing mitochondrial DNA. The sequence is that of Flap endonuclease 1 from Mus musculus (Mouse).